The primary structure comprises 221 residues: Keratin-associated protein 10-3 (221 aa).

Repeat copies occupy residues 26–30 (CCEPP), 31–35 (CCATS), 36–40 (CCAPA), 57–61 (CCQAA), 79–83 (CCQQS), 89–93 (CCTSS), 99–103 (CCVPV), 104–108 (CCKPV), 109–113 (CCVPV), 114–118 (CCKPV), 119–123 (CCKPI), 124–128 (CCVPV), 136–140 (CCQQS), 146–150 (CCTTS), 151–155 (CCRPS), 177–181 (CCAPA), 188–192 (CCRPA), and 210–214 (CCGLS). The segment at 26–214 (CCEPPCCATS…RLSSACCGLS (189 aa)) is 18 X 5 AA repeats of C-C-X(3).

It belongs to the KRTAP type 10 family. Interacts with hair keratins. In terms of tissue distribution, restricted to a narrow region of the hair fiber cuticle, lying approximately 20 cell layers above the apex of the dermal papilla of the hair root; not detected in any other tissues.

In the hair cortex, hair keratin intermediate filaments are embedded in an interfilamentous matrix, consisting of hair keratin-associated proteins (KRTAP), which are essential for the formation of a rigid and resistant hair shaft through their extensive disulfide bond cross-linking with abundant cysteine residues of hair keratins. The matrix proteins include the high-sulfur and high-glycine-tyrosine keratins. The polypeptide is Keratin-associated protein 10-3 (KRTAP10-3) (Homo sapiens (Human)).